We begin with the raw amino-acid sequence, 183 residues long: uncharacterized protein (183 aa).

A disordered region spans residues 1 to 23 (MGSSFVIDRSSSSPAPPRGPAPK).

This is an uncharacterized protein from Saccharomyces cerevisiae (strain ATCC 204508 / S288c) (Baker's yeast).